We begin with the raw amino-acid sequence, 161 residues long: Phosphopantetheine adenylyltransferase (161 aa).

T10 provides a ligand contact to substrate. Residues 10-11 and H18 each bind ATP; that span reads TF. Substrate-binding residues include K42, M74, and R88. ATP is bound by residues 89–91, E99, and 124–130; these read GLR and WSFISSS.

It belongs to the bacterial CoaD family. As to quaternary structure, homohexamer. It depends on Mg(2+) as a cofactor.

The protein resides in the cytoplasm. It catalyses the reaction (R)-4'-phosphopantetheine + ATP + H(+) = 3'-dephospho-CoA + diphosphate. It participates in cofactor biosynthesis; coenzyme A biosynthesis; CoA from (R)-pantothenate: step 4/5. Functionally, reversibly transfers an adenylyl group from ATP to 4'-phosphopantetheine, yielding dephospho-CoA (dPCoA) and pyrophosphate. The sequence is that of Phosphopantetheine adenylyltransferase from Serratia marcescens.